An 89-amino-acid chain; its full sequence is Large ribosomal subunit protein bL27 (89 aa).

Residues 1-24 (MAHKKAGGSSRNGRDSAGRRLGVK) are disordered.

This sequence belongs to the bacterial ribosomal protein bL27 family.

The polypeptide is Large ribosomal subunit protein bL27 (Maricaulis maris (strain MCS10) (Caulobacter maris)).